A 478-amino-acid polypeptide reads, in one-letter code: Glycogen synthase (478 aa).

Residue Lys-20 coordinates ADP-alpha-D-glucose.

It belongs to the glycosyltransferase 1 family. Bacterial/plant glycogen synthase subfamily.

The catalysed reaction is [(1-&gt;4)-alpha-D-glucosyl](n) + ADP-alpha-D-glucose = [(1-&gt;4)-alpha-D-glucosyl](n+1) + ADP + H(+). It participates in glycan biosynthesis; glycogen biosynthesis. In terms of biological role, synthesizes alpha-1,4-glucan chains using ADP-glucose. This is Glycogen synthase from Cereibacter sphaeroides (strain ATCC 17023 / DSM 158 / JCM 6121 / CCUG 31486 / LMG 2827 / NBRC 12203 / NCIMB 8253 / ATH 2.4.1.) (Rhodobacter sphaeroides).